Here is a 90-residue protein sequence, read N- to C-terminus: Mitochondrial import inner membrane translocase subunit Tim9 (90 aa).

The Twin CX3C motif motif lies at 24–48 (CFNSCVNEFGSRTVSGKEESCANNC). Disulfide bonds link C24/C48 and C28/C44.

The protein belongs to the small Tim family. Heterohexamer; composed of 3 copies of tim-9/tin-9.1 and 3 copies of tim-10/tin-10, named soluble 70 kDa complex. The complex associates with the tim-22 component of the TIM22 complex. Interacts with multi-pass transmembrane proteins in transit.

It localises to the mitochondrion inner membrane. Its function is as follows. Mitochondrial intermembrane chaperone that participates in the import and insertion of multi-pass transmembrane proteins into the mitochondrial inner membrane. May also be required for the transfer of beta-barrel precursors from the TOM complex to the sorting and assembly machinery (SAM complex) of the outer membrane. Acts as a chaperone-like protein that protects the hydrophobic precursors from aggregation and guide them through the mitochondrial intermembrane space. The polypeptide is Mitochondrial import inner membrane translocase subunit Tim9 (tin-9.1) (Caenorhabditis elegans).